The following is a 156-amino-acid chain: uncharacterized protein (156 aa).

The next 2 helical transmembrane spans lie at 46 to 66 and 114 to 134; these read GLVL…AGVV and IIDI…IVAL.

It is found in the cell membrane. This is an uncharacterized protein from Haemophilus influenzae (strain ATCC 51907 / DSM 11121 / KW20 / Rd).